The sequence spans 692 residues: Putative clathrin assembly protein At1g14910 (692 aa).

The ENTH domain maps to Arg24 to Ile161. Residues Tyr325 to Gly383 are disordered. Over residues Glu357 to Ile376 the composition is skewed to polar residues. Ser363 bears the Phosphoserine mark. Repeat 1 spans residues Phe532–Ser548. The interval Phe532 to Gly666 is 8 X 17 AA approximate tandem repeats. The stretch at Phe549–Gly564 is one 2; truncated repeat. 6 consecutive repeat copies span residues Phe565 to Ala581, Phe582 to Gly598, Phe599 to Gly615, Phe616 to Gly632, Phe633 to Gly649, and Leu650 to Gly666.

Expressed in the whole plant.

The protein localises to the membrane. Its subcellular location is the clathrin-coated pit. It is found in the golgi apparatus. The protein resides in the cytoplasmic vesicle. It localises to the clathrin-coated vesicle. The protein is Putative clathrin assembly protein At1g14910 of Arabidopsis thaliana (Mouse-ear cress).